A 132-amino-acid chain; its full sequence is Large-conductance mechanosensitive channel (132 aa).

Transmembrane regions (helical) follow at residues 14-34, 38-58, and 67-87; these read VVDL…VSSL, IITP…LHFG, and GNFI…FMFV.

Belongs to the MscL family. Homopentamer.

The protein resides in the cell membrane. Functionally, channel that opens in response to stretch forces in the membrane lipid bilayer. May participate in the regulation of osmotic pressure changes within the cell. The protein is Large-conductance mechanosensitive channel of Bacillus cereus (strain ATCC 10987 / NRS 248).